Here is a 365-residue protein sequence, read N- to C-terminus: 5-hydroxytryptamine receptor 1E (365 aa).

Residues 1–22 (MNITNCTTDASMVVRPKTVTEK) are Extracellular-facing. Asn2 and Asn5 each carry an N-linked (GlcNAc...) asparagine glycan. Residues 23–47 (MLICMTLVIITTLTMLLNSAVIMAI) traverse the membrane as a helical segment. At 48-59 (CTTKKLHQPANY) the chain is on the cytoplasmic side. A helical transmembrane segment spans residues 60–82 (LICSLAVTDLLVAVLVMPLSIMY). The Extracellular segment spans residues 83-96 (IVMDSWRLGYFICE). Cys95 and Cys173 are disulfide-bonded. The helical transmembrane segment at 97 to 118 (VWLSVDMTCCTCSILHLCVIAL) threads the bilayer. Positions 102 and 107 each coordinate ergotamine. The DRY motif; important for ligand-induced conformation changes signature appears at 119-121 (DRY). The Cytoplasmic segment spans residues 119–138 (DRYWAITNAIEYARKRTAKR). A helical transmembrane segment spans residues 139-160 (AGLMILTVWTISIFISMPPLFW). Over 161-179 (RSHRQLSPPPSQCTIQHDH) the chain is Extracellular. Ergotamine is bound at residue Ile175. The chain crosses the membrane as a helical span at residues 180-202 (VIYTIYSTFGAFYIPLTLILILY). The Cytoplasmic portion of the chain corresponds to 203 to 291 (YRIYHAAKSL…SSTRERKAAR (89 aa)). The chain crosses the membrane as a helical span at residues 292–314 (ILGLILGAFILSWLPFFIKELIV). Topologically, residues 315-324 (GLSIYTVSSE) are extracellular. Residues 325–347 (VGDFLTWLGYVNSLINPLLYTSF) traverse the membrane as a helical segment. Positions 340–344 (NPLLY) match the NPxxY motif; important for ligand-induced conformation changes and signaling motif. Over 348–365 (NEDFKLAFKKLIRCREHT) the chain is Cytoplasmic.

This sequence belongs to the G-protein coupled receptor 1 family. Detected in the brain with the greatest abundance in the hippocampus, followed by the olfactory bulb. Lower levels are detected in the cortex, thalamus, pons, hypothalamus, midbrain, striatum, and cerebellum.

The protein resides in the cell membrane. G-protein coupled receptor for 5-hydroxytryptamine (serotonin). Also functions as a receptor for various alkaloids and psychoactive substances. Ligand binding causes a conformation change that triggers signaling via guanine nucleotide-binding proteins (G proteins) and modulates the activity of down-stream effectors, such as adenylate cyclase. Signaling inhibits adenylate cyclase activity. This Cavia porcellus (Guinea pig) protein is 5-hydroxytryptamine receptor 1E (5HT1E).